The sequence spans 934 residues: Intimin (934 aa).

An N-terminal signal peptide occupies residues 1-39 (MITHGCYTRTRHKHKLKKTLIMLSAGLGLFFYVNQNSFA). The tract at residues 40 to 153 (NGENYFKLGS…KLTKMSPDVT (114 aa)) is peptidoglycan-binding. The interval 40–153 (NGENYFKLGS…KLTKMSPDVT (114 aa)) is sufficient for homodimerization. The tract at residues 40-212 (NGENYFKLGS…LQAWLQHYGT (173 aa)) is required for periplasmic localization. The region spanning 63–112 (LFYTLKTGETVADLSKSQDINLSTIWSLNKHLYSSESEMMKAAPGQQIIL) is the LysM domain. Residues 210 to 411 (YGTAEVNLQS…LYSMQFRYQF (202 aa)) form an inverse autotransporter region. The tract at residues 402 to 411 (LYSMQFRYQF) is signature sequence for beta-barrel assembly machinery (BAM), which recognizes the unfolded beta-barrel in the periplasm. The segment at 437–449 (LVQRNNNIILEYK) is minimum linker residues necessary for formation of a heat-modifiable beta-barrel. 2 Big-1 domains span residues 560–653 (VTDF…VIFF) and 660–753 (ITEI…VTFF). The intimin receptor Tir-binding stretch occupies residues 747–934 (ATEVTFFDEL…TPNVYAVCVE (188 aa)). One can recognise a BIG2 domain in the interval 787 to 833 (ASGGDGTYSWYSENTSIATVDASGKVTLNGKGSVVIKATSGDKQTVS). C858 and C932 form a disulfide bridge.

The protein belongs to the intimin/invasin family. Homodimer. Interacts with Tir.

Its subcellular location is the cell outer membrane. In terms of biological role, an inverse autotransporter. Adhesin, which mediates attachment to the human intestine epithelial cells. Necessary for the production of attaching and effacing lesions on infected human tissue culture cells. Anchored to the outer membrane by binding to peptidoglycan (PGN) via its periplasmic domain, thus helping in receptor interactions during host invasion. PGN-binding may also aid in resisting mechanical and chemical stress during transit of the bacterium through the gastrointestinal tract of the host. This is Intimin from Escherichia coli O157:H7.